The primary structure comprises 390 residues: Galactokinase (390 aa).

A substrate-binding site is contributed by 34 to 37 (EHTD). ATP contacts are provided by residues S68 and 122 to 128 (GSGLSSS). Mg(2+) is bound by residues S128 and E160. The active-site Proton acceptor is D172. Y221 is a binding site for substrate.

The protein belongs to the GHMP kinase family. GalK subfamily.

Its subcellular location is the cytoplasm. The enzyme catalyses alpha-D-galactose + ATP = alpha-D-galactose 1-phosphate + ADP + H(+). It participates in carbohydrate metabolism; galactose metabolism. Functionally, catalyzes the transfer of the gamma-phosphate of ATP to D-galactose to form alpha-D-galactose-1-phosphate (Gal-1-P). This chain is Galactokinase, found in Chloroflexus aggregans (strain MD-66 / DSM 9485).